Reading from the N-terminus, the 379-residue chain is Cytokine receptor common subunit gamma (379 aa).

The N-terminal stretch at 1–22 (MLKPPLPLRSLLFLQLPLLGVG) is a signal peptide. The Extracellular segment spans residues 23 to 269 (LNPKFLTPSG…ENIENPENPS (247 aa)). A disulfide bridge links Cys-68 with Cys-78. N-linked (GlcNAc...) asparagine glycosylation is found at Asn-77, Asn-81, and Asn-90. A disulfide bridge links Cys-109 with Cys-122. The 98-residue stretch at 163–260 (APENLTLRNL…IHWGSNTSKE (98 aa)) folds into the Fibronectin type-III domain. N-linked (GlcNAc...) asparagine glycosylation is found at Asn-166 and Asn-171. A WSXWS motif motif is present at residues 244 to 248 (WSDWS). A helical membrane pass occupies residues 270-290 (LFALEAVLIPLGSMGLIVSLI). Over 291–379 (CVYCWLERTM…PPCYTLKPEP (89 aa)) the chain is Cytoplasmic. Positions 299-307 (TMPRIPTLK) match the Box 1 motif motif. Thr-305 carries the post-translational modification Phosphothreonine. The tract at residues 349-370 (PPKGGEGPGGSPCSQHSPYWAP) is disordered.

It belongs to the type I cytokine receptor family. Type 5 subfamily. The gamma subunit is common to the IL2, IL4, IL7, IL15, IL21 and probably also the IL13 receptors. Interacts with SHB upon interleukin stimulation.

The protein resides in the cell membrane. It is found in the cell surface. Common subunit for the receptors for a variety of interleukins. Probably in association with IL15RA, involved in the stimulation of neutrophil phagocytosis by IL15. The protein is Cytokine receptor common subunit gamma (IL2RG) of Bos taurus (Bovine).